The following is a 260-amino-acid chain: Triosephosphate isomerase (260 aa).

Residue Asn-11–Lys-13 participates in substrate binding. Residue His-103 is the Electrophile of the active site. The Proton acceptor role is filled by Glu-175. Substrate is bound by residues Gly-181, Ser-220, and Gly-241 to Gly-242.

The protein belongs to the triosephosphate isomerase family. In terms of assembly, homodimer.

It is found in the cytoplasm. It catalyses the reaction D-glyceraldehyde 3-phosphate = dihydroxyacetone phosphate. Its pathway is carbohydrate biosynthesis; gluconeogenesis. It participates in carbohydrate degradation; glycolysis; D-glyceraldehyde 3-phosphate from glycerone phosphate: step 1/1. Its function is as follows. Involved in the gluconeogenesis. Catalyzes stereospecifically the conversion of dihydroxyacetone phosphate (DHAP) to D-glyceraldehyde-3-phosphate (G3P). In Shewanella denitrificans (strain OS217 / ATCC BAA-1090 / DSM 15013), this protein is Triosephosphate isomerase.